The sequence spans 27 residues: NGLCCSQYGFCGTTSQYCSRANGCQSN.

In terms of domain architecture, Chitin-binding type-1 spans 1-27 (NGLCCSQYGFCGTTSQYCSRANGCQSN). Cysteine 4 and cysteine 18 form a disulfide bridge.

In terms of tissue distribution, seeds (at protein level).

In terms of biological role, chitin-binding protein which functions in defense against chitin-containing fungal pathogens. The polypeptide is Morintide mO5 (Moringa oleifera (Horseradish tree)).